Here is a 444-residue protein sequence, read N- to C-terminus: 23S rRNA (uracil(1939)-C(5))-methyltransferase RlmD (444 aa).

Positions 5-64 (KPKLNLTSQTARIVNLSHDGRGIARVNGKATFIQGALPGEVVEFQYTRIKKDFDEGKLLS) constitute a TRAM domain. [4Fe-4S] cluster is bound by residues Cys77, Cys83, Cys86, and Cys166. Residues Gln276, Phe305, Asn310, Glu326, Asn353, and Asp374 each contribute to the S-adenosyl-L-methionine site. Cys400 functions as the Nucleophile in the catalytic mechanism.

Belongs to the class I-like SAM-binding methyltransferase superfamily. RNA M5U methyltransferase family. RlmD subfamily.

The enzyme catalyses uridine(1939) in 23S rRNA + S-adenosyl-L-methionine = 5-methyluridine(1939) in 23S rRNA + S-adenosyl-L-homocysteine + H(+). Functionally, catalyzes the formation of 5-methyl-uridine at position 1939 (m5U1939) in 23S rRNA. The protein is 23S rRNA (uracil(1939)-C(5))-methyltransferase RlmD of Legionella pneumophila (strain Corby).